The following is a 461-amino-acid chain: Demethyllactenocin mycarosyltransferase (461 aa).

A disordered region spans residues 1 to 21; the sequence is MAGLRPGAGVPPGTPWPISPG.

The protein belongs to the UDP-glycosyltransferase family.

It carries out the reaction dTDP-beta-L-mycarose + demethyllactenocin = demethylmacrocin + dTDP + H(+). In terms of biological role, involved in the biosynthesis of mycarose which is a 6-deoxyhexose sugar required during production of the macrolide antibiotic tylosin. Catalyzes the transfer of L-mycarosyl from dTDP-beta-L-mycarose to demethyllactenocin to yield demethylmacrocin. The protein is Demethyllactenocin mycarosyltransferase (tylCV) of Streptomyces fradiae (Streptomyces roseoflavus).